The sequence spans 144 residues: uncharacterized protein (144 aa).

4 helical membrane-spanning segments follow: residues 7-29, 51-73, 85-107, and 122-139; these read FPAS…RDLV, VAIG…FLLV, AVLA…VGAF, and HLHH…LIFV.

The protein resides in the cell membrane. This is an uncharacterized protein from Treponema pallidum (strain Nichols).